The following is a 315-amino-acid chain: Mitochondrial glycine transporter (315 aa).

3 Solcar repeats span residues 19–102 (SKTT…LRTG), 125–206 (TANL…LKRR), and 221–305 (KSSS…LILR). The next 6 helical transmembrane spans lie at 25–50 (FTAG…TRVQ), 77–103 (GTLP…RTGL), 128–153 (LATG…VRYE), 181–204 (GFGA…EQLK), 225–251 (INFV…KTRL), and 280–298 (GLGL…AWTV).

It belongs to the mitochondrial carrier (TC 2.A.29) family. SLC25A38 subfamily.

It localises to the mitochondrion inner membrane. The enzyme catalyses glycine(in) = glycine(out). In terms of biological role, mitochondrial glycine transporter that imports glycine into the mitochondrial matrix. Plays an important role in providing glycine for the first enzymatic step in heme biosynthesis, the condensation of glycine with succinyl-CoA to produce 5-aminolevulinate (ALA) in the mitochondrial matrix. The protein is Mitochondrial glycine transporter of Aspergillus niger (strain ATCC MYA-4892 / CBS 513.88 / FGSC A1513).